A 1008-amino-acid polypeptide reads, in one-letter code: MLLQSLFAWALAIGPCIAQNSTNSTWPIHNNGLTTQVEWDHYSLMVDGQRFFLWSGEFHYWRIPVPELWVDVLQKVKAAGFNTFAIYTHWYFHNPNPNTLDFENAAHNFTKIFDLAKELGMFVVFRPGPYVNAESNAGAFPLWLTTGAYGALRNNDERYTEAWTPFWEKVASIVAPYQFTNGGNVLTYQIENELGSQWRGTPSNKVPNLSSVEYMEALEASARAHGITIPFQANDPNLNSDSWSKDFYDGYGSVDIYGMDSYPACWTCNLTECDSTNGAYKAFNVIDYYDHFEAISPTQPSFLPEFQGGSFNPWGGPEGGCPENSPADFANLFYRNNVGQRVTAMSLYMIYGGTNWGWLAAPVVATSYDYSSPISENRMINDKYAETKLFGHFLRVAKDLTKTDRIGTGKTASTNPNVVYSEIRNPDTNAAFYVTIHKESTVGTREEFYINANTSKGAFKIPQKAASIVLNGFQSKIIVTDFNFGSHSLLYSTAEVLSHSIVDDQDILALWMPTGEAGEFVVTGAKSGSVSSCGGCSSVGFYPQGDDLLVTISQSKGISVLTFDDGLRVLVMDRSFAYEFWVPVLTADPFSPANETVFVQGPSLVRSAAYSSDGSTLDLTGDNNGTSTQIQVFPPKSVSKVTWNGQVITTEKTDYDSLIGSLTGPALDSLTLPTISGWKANDSLPERLPTYDDSWWVAADHMNTSNPTKPETLPVLYIDDYGYHVGNHLWRGRFEGSASGVYLSVTGGRAFGYSAWLNGEFIGSYLGAAYPDTGKLTLSFSNVTVNSNSTNILLVLQDNSGHDETSEALNPRGINNATLISSSTKNFTSWKVTGTAGKPDTAIDPVRGILSEGGLYAERLGWHLPDFDDSEWSSASPSNVSSSAGVTFYRTTVSLAIPTGLDVAISFTLKASPSNAALRVLLFVNGYQYGRFSPWIGNQVEFPVPPGILNYDGDNVIGLSVWRQEEGDESMGVNVGWKVTEAFASSFEPIFDAAYLQPGWTDERLQYA.

Positions 1–18 (MLLQSLFAWALAIGPCIA) are cleaved as a signal peptide. Residues N20 and N23 are each glycosylated (N-linked (GlcNAc...) asparagine). Residue Y87 participates in substrate binding. N-linked (GlcNAc...) asparagine glycosylation occurs at N108. Positions 132, 133, 134, and 192 each coordinate substrate. The active-site Proton donor is E193. Residue N208 is glycosylated (N-linked (GlcNAc...) asparagine). Y262 contributes to the substrate binding site. C268 and C321 form a disulfide bridge. An N-linked (GlcNAc...) asparagine glycan is attached at N269. E305 acts as the Nucleophile in catalysis. Position 370 (Y370) interacts with substrate. N453, N594, N624, N681, N703, N782, N788, N816, N826, and N879 each carry an N-linked (GlcNAc...) asparagine glycan.

It belongs to the glycosyl hydrolase 35 family.

Its subcellular location is the secreted. The catalysed reaction is Hydrolysis of terminal non-reducing beta-D-galactose residues in beta-D-galactosides.. Functionally, cleaves beta-linked terminal galactosyl residues from gangliosides, glycoproteins, and glycosaminoglycans. The polypeptide is Probable beta-galactosidase B (lacB) (Sclerotinia sclerotiorum (strain ATCC 18683 / 1980 / Ss-1) (White mold)).